The following is a 327-amino-acid chain: Aspartate--ammonia ligase (327 aa).

This sequence belongs to the class-II aminoacyl-tRNA synthetase family. AsnA subfamily.

The protein resides in the cytoplasm. The enzyme catalyses L-aspartate + NH4(+) + ATP = L-asparagine + AMP + diphosphate + H(+). The protein operates within amino-acid biosynthesis; L-asparagine biosynthesis; L-asparagine from L-aspartate (ammonia route): step 1/1. In Bacillus cereus (strain ATCC 10987 / NRS 248), this protein is Aspartate--ammonia ligase.